The following is a 261-amino-acid chain: Undecaprenyl-diphosphatase (261 aa).

The next 6 helical transmembrane spans lie at 39 to 59 (NVLL…LIIF), 76 to 96 (LLII…KDFF), 99 to 119 (LFVS…ILWL), 173 to 193 (AAKF…VLDL), 206 to 226 (IDLM…YFAV), and 238 to 258 (LTWF…LQAA).

This sequence belongs to the UppP family.

It localises to the cell membrane. It catalyses the reaction di-trans,octa-cis-undecaprenyl diphosphate + H2O = di-trans,octa-cis-undecaprenyl phosphate + phosphate + H(+). Catalyzes the dephosphorylation of undecaprenyl diphosphate (UPP). Confers resistance to bacitracin. This chain is Undecaprenyl-diphosphatase, found in Carboxydothermus hydrogenoformans (strain ATCC BAA-161 / DSM 6008 / Z-2901).